An 88-amino-acid chain; its full sequence is MGTARFLRAVLLLSVLLMVTFPALLSAEHHDGRVDICRLPSDSGDCLRFFEMWYFDGTTCTKFVYGGYGGNDNRFPTKKACMKRCAKA.

Residues 1–27 (MGTARFLRAVLLLSVLLMVTFPALLSA) form the signal peptide. The propeptide occupies 28-33 (EHHDGR). Residues 37–85 (CRLPSDSGDCLRFFEMWYFDGTTCTKFVYGGYGGNDNRFPTKKACMKRC) form the BPTI/Kunitz inhibitor domain. Cystine bridges form between C37–C85 and C60–C81.

This sequence belongs to the venom Kunitz-type family. 03 (sub-Kunitz) subfamily. In terms of tissue distribution, expressed by the venom gland.

It is found in the secreted. In terms of biological role, serine protease inhibitor that inhibits trypsin at a molar ratio of 1:1. This chain is Kunitz-type U15-theraphotoxin-Hhn1e, found in Cyriopagopus hainanus (Chinese bird spider).